The sequence spans 303 residues: Putative ankyrin repeat protein R601 (303 aa).

ANK repeat units follow at residues 86 to 115 (DDNM…DVTV), 117 to 146 (NNFA…DITV), 147 to 176 (DNYF…NVDS), and 200 to 233 (NADV…DVSY).

The chain is Putative ankyrin repeat protein R601 from Acanthamoeba polyphaga (Amoeba).